Reading from the N-terminus, the 330-residue chain is MAESAPLKIVFMGTPDFAAASLRHLLAWDGCDVVGVYTQPDRPCGRGQQCRPSAVKMLALEHGLDVRQPVSFRDEADVQALRDFGADILVVAAYGLILPQSVLDAAPMGAVNVHGSLLPRYRGAAPIQRAVMNGDAVTGITIMQVVKQLDAGPMLLQKALGIGCDETSGQLHDQLAELGGRLLVETLARLRAGTIMPIPQDDALATYAAKLTKADGLVDWNRTAVEVHAQVRGVTPWPAAYFTLRREGQKDVRVTIEPGTIGPLLEQPAVPGTIVGLVDGAIAFACADRTYLVRTIRPADKKPMTGEAFWCGYLSRCEGECPGFAVCEGA.

(6S)-5,6,7,8-tetrahydrofolate is bound at residue 116-119 (SLLP).

This sequence belongs to the Fmt family.

It carries out the reaction L-methionyl-tRNA(fMet) + (6R)-10-formyltetrahydrofolate = N-formyl-L-methionyl-tRNA(fMet) + (6S)-5,6,7,8-tetrahydrofolate + H(+). Its function is as follows. Attaches a formyl group to the free amino group of methionyl-tRNA(fMet). The formyl group appears to play a dual role in the initiator identity of N-formylmethionyl-tRNA by promoting its recognition by IF2 and preventing the misappropriation of this tRNA by the elongation apparatus. The chain is Methionyl-tRNA formyltransferase from Nitratidesulfovibrio vulgaris (strain ATCC 29579 / DSM 644 / CCUG 34227 / NCIMB 8303 / VKM B-1760 / Hildenborough) (Desulfovibrio vulgaris).